The chain runs to 283 residues: Elongation factor Ts (283 aa).

The interval 80-83 (TDFV) is involved in Mg(2+) ion dislocation from EF-Tu.

This sequence belongs to the EF-Ts family.

The protein localises to the cytoplasm. Its function is as follows. Associates with the EF-Tu.GDP complex and induces the exchange of GDP to GTP. It remains bound to the aminoacyl-tRNA.EF-Tu.GTP complex up to the GTP hydrolysis stage on the ribosome. The polypeptide is Elongation factor Ts (Salmonella agona (strain SL483)).